Here is a 313-residue protein sequence, read N- to C-terminus: Ribosomal protein L11 methyltransferase (313 aa).

Residues Thr-151, Gly-172, Asp-194, and Asn-245 each coordinate S-adenosyl-L-methionine.

Belongs to the methyltransferase superfamily. PrmA family.

The protein resides in the cytoplasm. It carries out the reaction L-lysyl-[protein] + 3 S-adenosyl-L-methionine = N(6),N(6),N(6)-trimethyl-L-lysyl-[protein] + 3 S-adenosyl-L-homocysteine + 3 H(+). Its function is as follows. Methylates ribosomal protein L11. The polypeptide is Ribosomal protein L11 methyltransferase (Nitrosomonas europaea (strain ATCC 19718 / CIP 103999 / KCTC 2705 / NBRC 14298)).